A 212-amino-acid chain; its full sequence is Fibrillarin-like rRNA/tRNA 2'-O-methyltransferase (212 aa).

S-adenosyl-L-methionine contacts are provided by residues 73-74 (TT), 91-92 (EI), 116-117 (DA), and 136-139 (DVAQ).

It belongs to the methyltransferase superfamily. Fibrillarin family. As to quaternary structure, interacts with nop5. Component of box C/D small ribonucleoprotein (sRNP) particles that contain rpl7ae, FlpA and nop5, plus a guide RNA.

Involved in pre-rRNA and tRNA processing. Utilizes the methyl donor S-adenosyl-L-methionine to catalyze the site-specific 2'-hydroxyl methylation of ribose moieties in rRNA and tRNA. Site specificity is provided by a guide RNA that base pairs with the substrate. Methylation occurs at a characteristic distance from the sequence involved in base pairing with the guide RNA. This Methanothrix thermoacetophila (strain DSM 6194 / JCM 14653 / NBRC 101360 / PT) (Methanosaeta thermophila) protein is Fibrillarin-like rRNA/tRNA 2'-O-methyltransferase.